The chain runs to 72 residues: Translation initiation factor IF-1 (72 aa).

An S1-like domain is found at 1–72 (MAKEELLEFP…TKGRITYRFK (72 aa)).

Belongs to the IF-1 family. As to quaternary structure, component of the 30S ribosomal translation pre-initiation complex which assembles on the 30S ribosome in the order IF-2 and IF-3, IF-1 and N-formylmethionyl-tRNA(fMet); mRNA recruitment can occur at any time during PIC assembly.

The protein resides in the cytoplasm. One of the essential components for the initiation of protein synthesis. Stabilizes the binding of IF-2 and IF-3 on the 30S subunit to which N-formylmethionyl-tRNA(fMet) subsequently binds. Helps modulate mRNA selection, yielding the 30S pre-initiation complex (PIC). Upon addition of the 50S ribosomal subunit IF-1, IF-2 and IF-3 are released leaving the mature 70S translation initiation complex. In Caulobacter vibrioides (strain ATCC 19089 / CIP 103742 / CB 15) (Caulobacter crescentus), this protein is Translation initiation factor IF-1.